Here is a 484-residue protein sequence, read N- to C-terminus: tRNA sulfurtransferase (484 aa).

The THUMP domain maps to 63 to 167; it reads DVFADRLACI…QDKLYMVERR (105 aa). ATP-binding positions include 185–186, Lys-267, Gly-289, and Gln-298; that span reads LI. A disulfide bridge connects residues Cys-346 and Cys-458. The Rhodanese domain maps to 406–484; that stretch reads VASGEIIIDV…GYTNVKVYRP (79 aa). Cys-458 acts as the Cysteine persulfide intermediate in catalysis.

This sequence belongs to the ThiI family.

It is found in the cytoplasm. The enzyme catalyses [ThiI sulfur-carrier protein]-S-sulfanyl-L-cysteine + a uridine in tRNA + 2 reduced [2Fe-2S]-[ferredoxin] + ATP + H(+) = [ThiI sulfur-carrier protein]-L-cysteine + a 4-thiouridine in tRNA + 2 oxidized [2Fe-2S]-[ferredoxin] + AMP + diphosphate. It carries out the reaction [ThiS sulfur-carrier protein]-C-terminal Gly-Gly-AMP + S-sulfanyl-L-cysteinyl-[cysteine desulfurase] + AH2 = [ThiS sulfur-carrier protein]-C-terminal-Gly-aminoethanethioate + L-cysteinyl-[cysteine desulfurase] + A + AMP + 2 H(+). Its pathway is cofactor biosynthesis; thiamine diphosphate biosynthesis. Its function is as follows. Catalyzes the ATP-dependent transfer of a sulfur to tRNA to produce 4-thiouridine in position 8 of tRNAs, which functions as a near-UV photosensor. Also catalyzes the transfer of sulfur to the sulfur carrier protein ThiS, forming ThiS-thiocarboxylate. This is a step in the synthesis of thiazole, in the thiamine biosynthesis pathway. The sulfur is donated as persulfide by IscS. This is tRNA sulfurtransferase from Shewanella frigidimarina (strain NCIMB 400).